A 35-amino-acid chain; its full sequence is Ranatuerin-2SPa (35 aa).

C28 and C33 are oxidised to a cystine.

As to expression, expressed by the skin glands.

It localises to the secreted. Functionally, antibacterial activity against Gram-positive bacterium S.aureus. Shows no detectable hemolytic activity towards human erythrocytes. The sequence is that of Ranatuerin-2SPa from Lithobates septentrionalis (Mink frog).